A 2084-amino-acid chain; its full sequence is RNA-directed RNA polymerase L (2084 aa).

The tract at residues 20–221 is endonuclease; the sequence is EPGLYDQIYD…IELQKSEEEL (202 aa). Mn(2+)-binding residues include His80, Asp112, and Glu126. Lys145 functions as the For endonuclease activity in the catalytic mechanism. A RdRp catalytic domain is found at 969-1172; it reads SARSLGPGSI…FGIYSSEKST (204 aa). Asp1127 is a Mg(2+) binding site. The cap-binding stretch occupies residues 1695 to 1810; sequence AQSGTLGGFS…TDGCPVRIME (116 aa).

This sequence belongs to the Bunyavirales RNA polymerase family. As to quaternary structure, homomultimer. Interacts with the glycoprotein N; this interaction allows efficient polymerase packaging into virus particles. Interacts with nucleoprotein N. Mn(2+) is required as a cofactor. The cofactor is Mg(2+).

The protein localises to the host Golgi apparatus. Its subcellular location is the host endoplasmic reticulum. The protein resides in the host endoplasmic reticulum-Golgi intermediate compartment. It localises to the virion. The enzyme catalyses RNA(n) + a ribonucleoside 5'-triphosphate = RNA(n+1) + diphosphate. With respect to regulation, inhibited by Baloxavir acid (BXA). In terms of biological role, RNA-dependent RNA polymerase, which is responsible for the replication and transcription of the viral RNA genome using antigenomic RNA as an intermediate. During transcription, synthesizes subgenomic RNAs and assures their capping by a cap-snatching mechanism, which involves the endonuclease activity cleaving the host capped pre-mRNAs. These short capped RNAs are then used as primers for viral transcription. The 3'-end of subgenomic mRNAs molecules are not polyadenylated. During replication, the polymerase binds the 5' and 3' vRNA extremities at distinct sites. In turn, significant conformational changes occur in the polymerase and in vRNA to initiate active RNA synthesis. As a consequence of the use of the same enzyme for both transcription and replication, these mechanisms need to be well coordinated. The sequence is that of RNA-directed RNA polymerase L from Dabie bandavirus (Severe fever with thrombocytopenia virus).